We begin with the raw amino-acid sequence, 173 residues long: Co-chaperone protein HscB (173 aa).

Positions 2–74 constitute a J domain; the sequence is DYFTLFGLPV…LKRAEYMLSL (73 aa).

It belongs to the HscB family. Interacts with HscA and stimulates its ATPase activity. Interacts with IscU.

Co-chaperone involved in the maturation of iron-sulfur cluster-containing proteins. Seems to help targeting proteins to be folded toward HscA. The sequence is that of Co-chaperone protein HscB from Serratia proteamaculans (strain 568).